The primary structure comprises 198 residues: Ribonuclease HII (198 aa).

Residues Arg-6–Asn-195 form the RNase H type-2 domain. A divalent metal cation is bound by residues Asp-12, Glu-13, and Asp-103.

It belongs to the RNase HII family. The cofactor is Mn(2+). Mg(2+) serves as cofactor.

Its subcellular location is the cytoplasm. The enzyme catalyses Endonucleolytic cleavage to 5'-phosphomonoester.. Functionally, endonuclease that specifically degrades the RNA of RNA-DNA hybrids. The protein is Ribonuclease HII of Roseobacter denitrificans (strain ATCC 33942 / OCh 114) (Erythrobacter sp. (strain OCh 114)).